The sequence spans 117 residues: Large ribosomal subunit protein bL20 (117 aa).

The protein belongs to the bacterial ribosomal protein bL20 family.

Binds directly to 23S ribosomal RNA and is necessary for the in vitro assembly process of the 50S ribosomal subunit. It is not involved in the protein synthesizing functions of that subunit. The polypeptide is Large ribosomal subunit protein bL20 (Wolinella succinogenes (strain ATCC 29543 / DSM 1740 / CCUG 13145 / JCM 31913 / LMG 7466 / NCTC 11488 / FDC 602W) (Vibrio succinogenes)).